The primary structure comprises 271 residues: Peroxiredoxin-4 (271 aa).

A signal peptide spans 1–37 (MEALPLLAATTPDHGRHRRLLLLPLLLFLLPAGAVQG). In terms of domain architecture, Thioredoxin spans 79-237 (AKISKPAPYW…TLRLVQAFQY (159 aa)). C124 acts as the Cysteine sulfenic acid (-SOH) intermediate in catalysis.

The protein belongs to the peroxiredoxin family. AhpC/Prx1 subfamily. Homodimer; disulfide-linked, upon oxidation. 5 homodimers assemble to form a ring-like decamer. Can form heterodimers with PRDX1. In terms of processing, the enzyme can be inactivated by further oxidation of the cysteine sulfenic acid (C(P)-SOH) to sulphinic acid (C(P)-SO2H) and sulphonic acid (C(P)-SO3H) instead of its condensation to a disulfide bond.

It is found in the cytoplasm. The protein resides in the endoplasmic reticulum. It carries out the reaction a hydroperoxide + [thioredoxin]-dithiol = an alcohol + [thioredoxin]-disulfide + H2O. Thiol-specific peroxidase that catalyzes the reduction of hydrogen peroxide and organic hydroperoxides to water and alcohols, respectively. Plays a role in cell protection against oxidative stress by detoxifying peroxides and as sensor of hydrogen peroxide-mediated signaling events. Regulates the activation of NF-kappa-B in the cytosol by a modulation of I-kappa-B-alpha phosphorylation. The polypeptide is Peroxiredoxin-4 (PRDX4) (Homo sapiens (Human)).